The chain runs to 280 residues: uncharacterized protein (280 aa).

The transit peptide at 1-51 (MATSLLLRHSSAVFFSQSSFFTKNKSFRSFTSIKMEKGEAENAVKTKKVFV) directs the protein to the chloroplast.

The protein belongs to the NAD(P)-dependent epimerase/dehydratase family.

The protein localises to the plastid. The protein resides in the chloroplast. It is found in the plastoglobule. This is an uncharacterized protein from Arabidopsis thaliana (Mouse-ear cress).